A 992-amino-acid chain; its full sequence is Sorting nexin-19 (992 aa).

The PXA domain maps to 95–272 (ERQLEREINR…VLVGIFSKAR (178 aa)). Positions 410 to 442 (ALEPKDGEASEGAEAEEGPGTETETGLPVSTLN) are disordered. A compositionally biased stretch (acidic residues) spans 418–428 (ASEGAEAEEGP). Residues 533–663 (LRITGTITAR…EFLALNTDAR (131 aa)) enclose the PX domain. A 1,2-diacyl-sn-glycero-3-phospho-(1D-myo-inositol-3-phosphate)-binding residues include R582 and R629. 3 disordered regions span residues 692 to 726 (FPRS…SRLR), 778 to 797 (QPTK…RVDS), and 973 to 992 (AATT…GVSS). 2 stretches are compositionally biased toward basic and acidic residues: residues 709–719 (TESKPQTEGKK) and 782–795 (APEK…KGRV). Positions 980–992 (DTPGNSKRMGVSS) are enriched in polar residues.

Belongs to the sorting nexin family. In terms of assembly, interacts with PTPRN.

It is found in the early endosome membrane. Its subcellular location is the cytoplasmic vesicle membrane. Plays a role in intracellular vesicle trafficking and exocytosis. May play a role in maintaining insulin-containing dense core vesicles in pancreatic beta-cells and in preventing their degradation. May play a role in insulin secretion. Interacts with membranes containing phosphatidylinositol 3-phosphate (PtdIns(3P)). The chain is Sorting nexin-19 (SNX19) from Homo sapiens (Human).